Here is a 375-residue protein sequence, read N- to C-terminus: Protein abhd-3.2 (375 aa).

The 96-residue stretch at 108 to 203 folds into the AB hydrolase-1 domain; that stretch reads PIVVFLPGIT…ILWNYLAMTG (96 aa). Residues S189, D315, and H344 each act as charge relay system in the active site.

This sequence belongs to the AB hydrolase superfamily. AB hydrolase 4 family.

The sequence is that of Protein abhd-3.2 from Caenorhabditis elegans.